Here is a 485-residue protein sequence, read N- to C-terminus: NADH-quinone oxidoreductase subunit N (485 aa).

The next 14 helical transmembrane spans lie at 8–28 (LIALLPLLIVGLTVVVVMLSI), 35–55 (FLNATLSVIGLNAALVSLWFV), 71–91 (GFAMLYTGLVLLASLATCTFA), 105–125 (FYLLVLIAALGGILLANANHL), 127–147 (SLFLGIELISLPLFGLVGYAF), 159–179 (YTILSAAASSFLLFGMALVYA), 203–223 (LLAGFGLMIVGLGFKLSLVPF), 235–255 (PAPVSTFLATASKIAIFGVVM), 271–291 (VVLAIIAFASIIFGNLMALSQ), 297–317 (LLGYSSISHLGYLLVALIALQ), 326–346 (VGVYLAGYLFSSLGAFGVVSL), 373–393 (AAVMTVMMLSLAGIPMTLGFI), 408–430 (WWLVGAVVVGSAIGLYYYLRVAV), and 455–475 (IVVLISALLVLVLGVWPQPLI).

The protein belongs to the complex I subunit 2 family. In terms of assembly, NDH-1 is composed of 13 different subunits. Subunits NuoA, H, J, K, L, M, N constitute the membrane sector of the complex.

It localises to the cell inner membrane. The catalysed reaction is a quinone + NADH + 5 H(+)(in) = a quinol + NAD(+) + 4 H(+)(out). In terms of biological role, NDH-1 shuttles electrons from NADH, via FMN and iron-sulfur (Fe-S) centers, to quinones in the respiratory chain. The immediate electron acceptor for the enzyme in this species is believed to be ubiquinone. Couples the redox reaction to proton translocation (for every two electrons transferred, four hydrogen ions are translocated across the cytoplasmic membrane), and thus conserves the redox energy in a proton gradient. The sequence is that of NADH-quinone oxidoreductase subunit N from Escherichia coli (strain ATCC 8739 / DSM 1576 / NBRC 3972 / NCIMB 8545 / WDCM 00012 / Crooks).